The sequence spans 1868 residues: Dedicator of cytokinesis protein 5 (1868 aa).

The region spanning 8 to 69 (KRQKYGVAIY…PETYIHLKEA (62 aa)) is the SH3 domain. Position 365 is a phosphoserine (serine 365). The C2 DOCK-type domain maps to 443 to 627 (RNDIYVTLIH…DSFQIATLIC (185 aa)). Lysine 818 is subject to N6-acetyllysine. Residues 1231–1642 (YKDKKREDIY…VEKLYGVITL (412 aa)) enclose the DOCKER domain. Residues 1681-1692 (STSSNSSDNASS) show a composition bias toward low complexity. Disordered stretches follow at residues 1681 to 1730 (STSS…RISK) and 1742 to 1868 (QVIA…PGSQ). Residues 1704 to 1728 (LFERRASSGARVEDLPPKEDSENRI) are compositionally biased toward basic and acidic residues. 5 positions are modified to phosphoserine: serine 1755, serine 1765, serine 1771, serine 1784, and serine 1788. Threonine 1793 is subject to Phosphothreonine. Residues 1796-1810 (ATRTLSSPSLQTDGL) are compositionally biased toward polar residues. Residues serine 1832 and serine 1867 each carry the phosphoserine modification.

This sequence belongs to the DOCK family. In terms of assembly, interacts with CRK and CRKL. Interacts (via N-terminus) with tensin TNS3 (via N-terminus); the interaction increases DOCK5 guanine nucleotide exchange activity towards Rac. Interacts with ELMO1. Highly expressed in lens, where it predominantly localizes to anterior epithelial cells, and is weakly expressed in lens fiber (at protein level). Expressed in brain, eye, lung, spleen and kidney, but not in thymus or peripheral blood leukocytes.

It localises to the cytoplasm. It is found in the cell membrane. The protein resides in the cell projection. Its subcellular location is the podosome. Its function is as follows. Guanine nucleotide exchange factor (GEF) for Rho and Rac. GEF proteins activate small GTPases by exchanging bound GDP for free GTP. Along with DOCK1, mediates CRK/CRKL regulation of epithelial and endothelial cell spreading and migration on type IV collagen. The sequence is that of Dedicator of cytokinesis protein 5 from Mus musculus (Mouse).